We begin with the raw amino-acid sequence, 84 residues long: RNA-binding protein Hfq (84 aa).

Residues 11 to 71 form the Sm domain; that stretch reads DTFLNHVRKN…ISTIMPGHPV (61 aa).

Belongs to the Hfq family. In terms of assembly, homohexamer.

In terms of biological role, RNA chaperone that binds small regulatory RNA (sRNAs) and mRNAs to facilitate mRNA translational regulation in response to envelope stress, environmental stress and changes in metabolite concentrations. Also binds with high specificity to tRNAs. This Methylobacterium nodulans (strain LMG 21967 / CNCM I-2342 / ORS 2060) protein is RNA-binding protein Hfq.